Reading from the N-terminus, the 276-residue chain is Undecaprenyl-diphosphatase 2 (276 aa).

7 consecutive transmembrane segments (helical) span residues 3 to 23, 48 to 68, 92 to 112, 119 to 139, 196 to 216, 225 to 245, and 255 to 275; these read IWDIIVAIILGIVEGLTEYAP, AANTFKVVIQLGSILAVAFVF, LSIAQIAVGLVPAAVLGFLFE, LFSVRTVAVGLIAGAVLMLAA, ADFTFIMAIPIMMGASLLSLI, DLLPFFIAGFISAFIVALFVV, and IKLVPFAIYRIVLGLLLFILF.

The protein belongs to the UppP family.

Its subcellular location is the cell membrane. It carries out the reaction di-trans,octa-cis-undecaprenyl diphosphate + H2O = di-trans,octa-cis-undecaprenyl phosphate + phosphate + H(+). Functionally, catalyzes the dephosphorylation of undecaprenyl diphosphate (UPP). Confers resistance to bacitracin. The protein is Undecaprenyl-diphosphatase 2 of Bacillus licheniformis (strain ATCC 14580 / DSM 13 / JCM 2505 / CCUG 7422 / NBRC 12200 / NCIMB 9375 / NCTC 10341 / NRRL NRS-1264 / Gibson 46).